Here is a 323-residue protein sequence, read N- to C-terminus: Sphingolipid delta(4)-desaturase/C4-monooxygenase DES2 (323 aa).

The N-myristoyl glycine moiety is linked to residue Gly2. A run of 2 helical transmembrane segments spans residues 45–65 (WAVL…RGLA) and 68–88 (WLLF…TLAI). The short motif at 89–93 (HDISH) is the Histidine box-1 element. The interval 95-99 (AAFGT) is required for C4-hydroxylase activity. A Histidine box-2 motif is present at residues 128 to 132 (HVDHH). A helical transmembrane segment spans residues 210–231 (VYLLASSFLGLGLHPISGHFVA). The Histidine box-3 motif lies at 259–263 (HVEHH).

Belongs to the fatty acid desaturase type 1 family. DEGS subfamily. In terms of tissue distribution, highly expressed in skin, intestine and kidney.

It is found in the endoplasmic reticulum membrane. It carries out the reaction a dihydroceramide + 2 Fe(II)-[cytochrome b5] + O2 + 2 H(+) = a phytoceramide + 2 Fe(III)-[cytochrome b5] + H2O. The catalysed reaction is an N-acylsphinganine + 2 Fe(II)-[cytochrome b5] + O2 + 2 H(+) = an N-acylsphing-4-enine + 2 Fe(III)-[cytochrome b5] + 2 H2O. It catalyses the reaction N-octanoylsphinganine + 2 Fe(II)-[cytochrome b5] + O2 + 2 H(+) = N-octanoyl-4-hydroxysphinganine + 2 Fe(III)-[cytochrome b5] + H2O. The enzyme catalyses an N-acylsphinganine + 2 Fe(II)-[cytochrome b5] + O2 + 2 H(+) = an N-acyl-(4R)-4-hydroxysphinganine + 2 Fe(III)-[cytochrome b5] + H2O. Its pathway is membrane lipid metabolism; sphingolipid biosynthesis. Bifunctional enzyme which acts both as a sphingolipid delta(4)-desaturase and a sphingolipid C4-monooxygenase. This chain is Sphingolipid delta(4)-desaturase/C4-monooxygenase DES2, found in Homo sapiens (Human).